The chain runs to 558 residues: Probable beta-glucosidase btgE (558 aa).

An N-terminal signal peptide occupies residues 1–18; that stretch reads MKAAILATAAALTGSALA. Disordered regions lie at residues 64-105 and 251-305; these read STPS…PETP and LPSS…QMGM. Composition is skewed to low complexity over residues 76–105 and 252–292; these read PETT…PETP and PSSS…SSSA. Over residues 293 to 305 the composition is skewed to polar residues; it reads EVPQTTGSGQMGM. E399 (proton donor) is an active-site residue. E495 acts as the Nucleophile in catalysis.

The protein belongs to the glycosyl hydrolase 17 family.

The protein resides in the secreted. The protein localises to the cell wall. The catalysed reaction is Hydrolysis of terminal, non-reducing beta-D-glucosyl residues with release of beta-D-glucose.. Its pathway is glycan metabolism; cellulose degradation. In terms of biological role, beta-glucosidases are one of a number of cellulolytic enzymes involved in the degradation of cellulosic biomass. Catalyzes the last step releasing glucose from the inhibitory cellobiose. The protein is Probable beta-glucosidase btgE (btgE) of Aspergillus terreus (strain NIH 2624 / FGSC A1156).